Reading from the N-terminus, the 397-residue chain is Elongation factor Tu (397 aa).

Positions 10-207 constitute a tr-type G domain; sequence KPHCNIGTIG…AVDEYIPQPE (198 aa). The tract at residues 19–26 is G1; sequence GHVDHGKT. A GTP-binding site is contributed by 19–26; the sequence is GHVDHGKT. Mg(2+) is bound at residue Thr-26. The G2 stretch occupies residues 61-65; it reads GITIS. The segment at 82–85 is G3; sequence DCPG. Residues 82–86 and 137–140 each bind GTP; these read DCPGH and NKVD. Residues 137-140 are G4; that stretch reads NKVD. Positions 175 to 177 are G5; that stretch reads SAL.

Belongs to the TRAFAC class translation factor GTPase superfamily. Classic translation factor GTPase family. EF-Tu/EF-1A subfamily. As to quaternary structure, monomer.

It is found in the cytoplasm. The enzyme catalyses GTP + H2O = GDP + phosphate + H(+). Functionally, GTP hydrolase that promotes the GTP-dependent binding of aminoacyl-tRNA to the A-site of ribosomes during protein biosynthesis. This chain is Elongation factor Tu, found in Zymomonas mobilis subsp. mobilis (strain ATCC 31821 / ZM4 / CP4).